A 455-amino-acid polypeptide reads, in one-letter code: Kynureninase (455 aa).

Pyridoxal 5'-phosphate-binding positions include L94, T95, 122 to 125 (FPSD), D208, H211, and Y233. K234 is modified (N6-(pyridoxal phosphate)lysine). 2 residues coordinate pyridoxal 5'-phosphate: W275 and N303.

Belongs to the kynureninase family. As to quaternary structure, homodimer. It depends on pyridoxal 5'-phosphate as a cofactor.

It is found in the cytoplasm. The catalysed reaction is L-kynurenine + H2O = anthranilate + L-alanine + H(+). It carries out the reaction 3-hydroxy-L-kynurenine + H2O = 3-hydroxyanthranilate + L-alanine + H(+). Its pathway is amino-acid degradation; L-kynurenine degradation; L-alanine and anthranilate from L-kynurenine: step 1/1. It participates in cofactor biosynthesis; NAD(+) biosynthesis; quinolinate from L-kynurenine: step 2/3. Its function is as follows. Catalyzes the cleavage of L-kynurenine (L-Kyn) and L-3-hydroxykynurenine (L-3OHKyn) into anthranilic acid (AA) and 3-hydroxyanthranilic acid (3-OHAA), respectively. This Vanderwaltozyma polyspora (strain ATCC 22028 / DSM 70294 / BCRC 21397 / CBS 2163 / NBRC 10782 / NRRL Y-8283 / UCD 57-17) (Kluyveromyces polysporus) protein is Kynureninase.